Consider the following 204-residue polypeptide: Holliday junction branch migration complex subunit RuvA (204 aa).

Residues 1–67 (MIAFLSGHLV…ETELVLYGFG (67 aa)) are domain I. The domain II stretch occupies residues 68–146 (SPAERDLFVE…HWRQGMGVAD (79 aa)). Residues 147 to 157 (QPLAGGPPMPI) are flexible linker. The domain III stretch occupies residues 157–204 (IREEVEMALLALGYSTQEIQAALQALPTHPRPTEDWLRDAITYLSQQP).

The protein belongs to the RuvA family. In terms of assembly, homotetramer. Forms an RuvA(8)-RuvB(12)-Holliday junction (HJ) complex. HJ DNA is sandwiched between 2 RuvA tetramers; dsDNA enters through RuvA and exits via RuvB. An RuvB hexamer assembles on each DNA strand where it exits the tetramer. Each RuvB hexamer is contacted by two RuvA subunits (via domain III) on 2 adjacent RuvB subunits; this complex drives branch migration. In the full resolvosome a probable DNA-RuvA(4)-RuvB(12)-RuvC(2) complex forms which resolves the HJ.

It is found in the cytoplasm. In terms of biological role, the RuvA-RuvB-RuvC complex processes Holliday junction (HJ) DNA during genetic recombination and DNA repair, while the RuvA-RuvB complex plays an important role in the rescue of blocked DNA replication forks via replication fork reversal (RFR). RuvA specifically binds to HJ cruciform DNA, conferring on it an open structure. The RuvB hexamer acts as an ATP-dependent pump, pulling dsDNA into and through the RuvAB complex. HJ branch migration allows RuvC to scan DNA until it finds its consensus sequence, where it cleaves and resolves the cruciform DNA. This is Holliday junction branch migration complex subunit RuvA from Synechococcus sp. (strain JA-2-3B'a(2-13)) (Cyanobacteria bacterium Yellowstone B-Prime).